Reading from the N-terminus, the 761-residue chain is Zinc finger protein 711 (761 aa).

Residues Lys-224, Lys-235, and Lys-296 each participate in a glycyl lysine isopeptide (Lys-Gly) (interchain with G-Cter in SUMO2) cross-link. 5 C2H2-type zinc fingers span residues 383–408 (YPCH…HPDH), 414–436 (YQCT…LESH), 476–499 (HKCK…LAVH), 505–527 (HVCV…MRTH), and 533–556 (YQCQ…KSKH). The C2H2-type 6; atypical zinc finger occupies 562 to 584 (YKCEHCPQAFGDERELQRHLDLF). Zn(2+)-binding residues include Cys-564, Cys-567, and His-580. 6 consecutive C2H2-type zinc fingers follow at residues 590–613 (HQCP…ISVH), 619–641 (HKCE…SDIH), 647–670 (HQCR…LSVH), 676–698 (LKCK…MKTH), 704–727 (YQCE…ISIH), and 733–755 (HRCE…IMRH).

It belongs to the krueppel C2H2-type zinc-finger protein family. Interacts with PHF8.

The protein resides in the nucleus. Transcription regulator required for brain development. Probably acts as a transcription factor that binds to the promoter of target genes and recruits PHF8 histone demethylase, leading to activated expression of genes involved in neuron development, such as KDM5C. May compete with transcription factor ARX for activation of expression of KDM5C. The protein is Zinc finger protein 711 (Znf711) of Mus musculus (Mouse).